The primary structure comprises 541 residues: NEDD8-activating enzyme E1 regulatory subunit (541 aa).

It belongs to the ubiquitin-activating E1 family. ULA1 subfamily. Heterodimer of uba-3 and ula-1. The complex binds NEDD8 and ubc-12.

It functions in the pathway protein modification; protein neddylation. Functionally, regulatory subunit of the dimeric uba-3-ula-1 E1 enzyme. E1 activates NEDD8 by first adenylating its C-terminal glycine residue with ATP, thereafter linking this residue to the side chain of the catalytic cysteine, yielding a NEDD8-rfl-1 (uba-3) thioester and free AMP. E1 finally transfers NEDD8 to the catalytic cysteine of ubc-12. Required for rfl-1 (uba-3) nuclear localization during early embryonic development. The chain is NEDD8-activating enzyme E1 regulatory subunit (ula-1) from Caenorhabditis elegans.